We begin with the raw amino-acid sequence, 33 residues long: Photosystem II reaction center protein Psb30 (33 aa).

Residues 5–25 (VIAQLTMLTIAVITGPLVIFF) form a helical membrane-spanning segment.

It belongs to the Psb30/Ycf12 family. PSII is composed of 1 copy each of membrane proteins PsbA, PsbB, PsbC, PsbD, PsbE, PsbF, PsbH, PsbI, PsbJ, PsbK, PsbL, PsbM, PsbT, PsbX, PsbY, PsbZ, Psb30/Ycf12, peripheral proteins of the oxygen-evolving complex and a large number of cofactors. It forms dimeric complexes.

It is found in the plastid. It localises to the chloroplast thylakoid membrane. Its function is as follows. A core subunit of photosystem II (PSII), probably helps stabilize the reaction center. The chain is Photosystem II reaction center protein Psb30 from Welwitschia mirabilis (Tree tumbo).